The sequence spans 337 residues: Glyceraldehyde-3-phosphate dehydrogenase (337 aa).

Residues 12 to 13, aspartate 34, and arginine 79 each bind NAD(+); that span reads RI. D-glyceraldehyde 3-phosphate-binding positions include 150 to 152, threonine 181, 210 to 211, and arginine 233; these read SCT and TG. Residue cysteine 151 is the Nucleophile of the active site. Asparagine 315 is a binding site for NAD(+).

Belongs to the glyceraldehyde-3-phosphate dehydrogenase family. In terms of assembly, homotetramer.

Its subcellular location is the cytoplasm. It carries out the reaction D-glyceraldehyde 3-phosphate + phosphate + NAD(+) = (2R)-3-phospho-glyceroyl phosphate + NADH + H(+). It functions in the pathway carbohydrate degradation; glycolysis; pyruvate from D-glyceraldehyde 3-phosphate: step 1/5. The protein is Glyceraldehyde-3-phosphate dehydrogenase (GPD-1) of Claviceps purpurea (strain 20.1) (Ergot fungus).